A 231-amino-acid chain; its full sequence is Uracil-DNA glycosylase (231 aa).

Aspartate 70 (proton acceptor) is an active-site residue.

Belongs to the uracil-DNA glycosylase (UDG) superfamily. UNG family.

The protein localises to the cytoplasm. It catalyses the reaction Hydrolyzes single-stranded DNA or mismatched double-stranded DNA and polynucleotides, releasing free uracil.. Functionally, excises uracil residues from the DNA which can arise as a result of misincorporation of dUMP residues by DNA polymerase or due to deamination of cytosine. This chain is Uracil-DNA glycosylase, found in Campylobacter curvus (strain 525.92).